The sequence spans 449 residues: MGFKRTIGLLLGILLALDQVSVLAQPGRPTFAKRPDIQPNPIQPYKAIPLHSRRNSHKVCYVKPSLNGGDDAGRVEAALRRCNNGGTIVLDKEYSICTPLDLRFLKHVDVALTGKVEFCPELEFWQQNVFQFHFQNASSWWVWGGEDIHLYGAGTGVIHGNGQPWWDAAAGNSSVRRPLLFITDGWHGGSITGLKLRQSPNWHNFIANSSDLLISDMDIFSRSSSEAWASNLDGWDTFRSDNVVIQNSVINHDDDCVSFKPNSTNIIVQGLHCNGSHGISVGSLGNYPYQYDIVSDLYIYNNTMANTTTAARLKVWPGAEAVKKGNPPWVGGGGKGYVRNVTYDLMINDNNDLAIQIDQCYGAINASECLDHPSGVILTNVLFKNMWGTSNGANDPVAGQLICGSADSCDNIRAENVTLTNSSGQPSEWQCRYMDEELLDLGGVGCIPA.

The signal sequence occupies residues 1 to 24; the sequence is MGFKRTIGLLLGILLALDQVSVLA. N-linked (GlcNAc...) asparagine glycosylation is found at asparagine 136, asparagine 172, and asparagine 208. The stretch at 240–261 is one PbH1 1 repeat; the sequence is SDNVVIQNSVINHDDDCVSFKP. Aspartate 254 acts as the Proton donor in catalysis. The cysteines at positions 256 and 273 are disulfide-linked. 2 N-linked (GlcNAc...) asparagine glycosylation sites follow: asparagine 262 and asparagine 274. PbH1 repeat units lie at residues 263 to 283 and 294 to 315; these read STNIIVQGLHCNGSHGISVGS and VSDLYIYNNTMANTTTAARLKV. The active site involves histidine 277. N-linked (GlcNAc...) asparagine glycosylation is found at asparagine 301, asparagine 306, asparagine 340, and asparagine 365. Cysteine 403 and cysteine 409 are oxidised to a cystine. N-linked (GlcNAc...) asparagine glycans are attached at residues asparagine 416 and asparagine 421.

Belongs to the glycosyl hydrolase 28 family.

Its subcellular location is the secreted. It carries out the reaction [(1-&gt;4)-alpha-D-galacturonosyl](n) + H2O = alpha-D-galacturonate + [(1-&gt;4)-alpha-D-galacturonosyl](n-1). Its function is as follows. Specific in hydrolyzing the terminal glycosidic bond of polygalacturonic acid and oligogalacturonates. This Emericella nidulans (strain FGSC A4 / ATCC 38163 / CBS 112.46 / NRRL 194 / M139) (Aspergillus nidulans) protein is Exopolygalacturonase X-2 (pgaX-2).